Here is a 112-residue protein sequence, read N- to C-terminus: Photosystem II reaction center Psb28 protein (112 aa).

It belongs to the Psb28 family. Part of the photosystem II complex.

The protein resides in the cellular thylakoid membrane. The chain is Photosystem II reaction center Psb28 protein from Synechocystis sp. (strain ATCC 27184 / PCC 6803 / Kazusa).